The primary structure comprises 420 residues: Hemojuvelin (420 aa).

Positions methionine 1–serine 32 are cleaved as a signal peptide. At tyrosine 43 the chain carries Phosphotyrosine. N-linked (GlcNAc...) asparagine glycosylation is present at asparagine 111. A disordered region spans residues serine 113–proline 135. A compositionally biased stretch (low complexity) spans glycine 125–alanine 134. 2 disulfides stabilise this stretch: cysteine 141-cysteine 223 and cysteine 160-cysteine 310. 2 N-linked (GlcNAc...) asparagine glycosylation sites follow: asparagine 206 and asparagine 365. A lipid anchor (GPI-anchor amidated aspartate) is attached at aspartate 393. Residues alanine 394–lysine 420 constitute a propeptide, removed in mature form.

Belongs to the repulsive guidance molecule (RGM) family. As to quaternary structure, interacts with BMP2 and BMP4. Interacts with BMP6. Interacts with BMPR1B. Interacts with TMPRSS6. Post-translationally, autocatalytically cleaved at low pH; the two chains remain linked via two disulfide bonds. Also proteolytically processed by TMPRSS6, several fragments being released in the extracellular space; regulates HJV activity in BMP signaling and thefore iron homeostasis. As to expression, muscle cell lineage.

It localises to the cell membrane. Acts as a bone morphogenetic protein (BMP) coreceptor. Through enhancement of BMP signaling regulates hepcidin (HAMP) expression and regulates iron homeostasis. This Mus musculus (Mouse) protein is Hemojuvelin.